The chain runs to 101 residues: Small ribosomal subunit protein uS14 (101 aa).

Belongs to the universal ribosomal protein uS14 family. In terms of assembly, part of the 30S ribosomal subunit. Contacts proteins S3 and S10.

Functionally, binds 16S rRNA, required for the assembly of 30S particles and may also be responsible for determining the conformation of the 16S rRNA at the A site. In Saccharophagus degradans (strain 2-40 / ATCC 43961 / DSM 17024), this protein is Small ribosomal subunit protein uS14.